We begin with the raw amino-acid sequence, 60 residues long: Large ribosomal subunit protein uL30 (60 aa).

The protein belongs to the universal ribosomal protein uL30 family. In terms of assembly, part of the 50S ribosomal subunit.

This chain is Large ribosomal subunit protein uL30, found in Ralstonia pickettii (strain 12J).